We begin with the raw amino-acid sequence, 299 residues long: Coenzyme PQQ synthesis protein B (299 aa).

This sequence belongs to the PqqB family.

Its pathway is cofactor biosynthesis; pyrroloquinoline quinone biosynthesis. Functionally, may be involved in the transport of PQQ or its precursor to the periplasm. The sequence is that of Coenzyme PQQ synthesis protein B from Methylobacterium radiotolerans (strain ATCC 27329 / DSM 1819 / JCM 2831 / NBRC 15690 / NCIMB 10815 / 0-1).